A 609-amino-acid polypeptide reads, in one-letter code: Replication protein E1 (609 aa).

Positions 81 to 83 (KRK) match the Nuclear localization signal motif. Residues S87 and S94 each carry the phosphoserine; by host modification. A Nuclear export signal motif is present at residues 93–102 (LSPRLQSITI). Residues 149 to 312 (QGAKGLGIVK…TMINHQSAEA (164 aa)) form a DNA-binding region region. The SF3 helicase domain occupies 411-561 (INFIRFLDVF…FPFDSNNKPQ (151 aa)). 437 to 444 (GPPDTGKS) lines the ATP pocket. A Glycyl lysine isopeptide (Lys-Gly) (interchain with G-Cter in SUMO) cross-link involves residue K518. The segment at 584 to 609 (DQEDEGDDGHTQRSFQCTAREPNGHL) is disordered.

This sequence belongs to the papillomaviridae E1 protein family. As to quaternary structure, can form hexamers. Interacts with E2 protein; this interaction increases E1 DNA binding specificity. Interacts with host DNA polymerase subunit POLA2. Interacts with host single stranded DNA-binding protein RPA1. Interacts with host TOP1; this interaction stimulates the enzymatic activity of TOP1. Phosphorylated. Post-translationally, sumoylated.

The protein localises to the host nucleus. It catalyses the reaction Couples ATP hydrolysis with the unwinding of duplex DNA by translocating in the 3'-5' direction.. The enzyme catalyses ATP + H2O = ADP + phosphate + H(+). ATP-dependent DNA 3'-5' helicase required for initiation of viral DNA replication. It forms a complex with the viral E2 protein. The E1-E2 complex binds to the replication origin which contains binding sites for both proteins. During the initial step, a dimer of E1 interacts with a dimer of protein E2 leading to a complex that binds the viral origin of replication with high specificity. Then, a second dimer of E1 displaces the E2 dimer in an ATP-dependent manner to form the E1 tetramer. Following this, two E1 monomers are added to each half of the site, which results in the formation of two E1 trimers on the viral ori. Subsequently, two hexamers will be created. The double hexamer acts as a bi-directional helicase machinery and unwinds the viral DNA and then recruits the host DNA polymerase to start replication. This chain is Replication protein E1, found in Human papillomavirus 37.